A 335-amino-acid polypeptide reads, in one-letter code: 2,4-dienoyl-CoA reductase [(3E)-enoyl-CoA-producing], mitochondrial (335 aa).

The N-terminal 34 residues, 1-34, are a transit peptide targeting the mitochondrion; the sequence is MALLGRAFFAGVSRLPCDPGPQRFFSFGTKTLYQ. N6-acetyllysine; alternate is present on residues Lys-42 and Lys-49. 2 positions are modified to N6-succinyllysine; alternate: Lys-42 and Lys-49. Residue 66-71 participates in NADP(+) binding; it reads GGGTGL. Position 69 is a phosphothreonine (Thr-69). Lys-73 carries the N6-succinyllysine modification. Residue Arg-91 coordinates NADP(+). Arg-91 is a substrate binding site. Lys-97 and Lys-106 each carry N6-acetyllysine; alternate. N6-succinyllysine; alternate occurs at positions 97 and 106. Asp-117 contacts NADP(+). Substrate-binding residues include Arg-119 and Phe-149. The active-site Proton acceptor is Tyr-199. NADP(+)-binding positions include Lys-214 and 240 to 243; that span reads PGPI. Position 244 is an N6-acetyllysine; alternate (Lys-244). Lys-244 carries the N6-succinyllysine; alternate modification. Residue Arg-251 coordinates substrate. Lys-260 bears the N6-acetyllysine; alternate mark. At Lys-260 the chain carries N6-succinyllysine; alternate. Position 315 is an N6-acetyllysine (Lys-315). Lys-319 bears the N6-acetyllysine; alternate mark. At Lys-319 the chain carries N6-succinyllysine; alternate.

The protein belongs to the short-chain dehydrogenases/reductases (SDR) family. 2,4-dienoyl-CoA reductase subfamily. In terms of assembly, homotetramer.

It is found in the mitochondrion. It carries out the reaction a (2E,4E)-dienoyl-CoA + NADPH + H(+) = a 4,5-saturated-(3E)-enoyl-CoA + NADP(+). It catalyses the reaction a (2E,4Z)-dienoyl-CoA + NADPH + H(+) = a 4,5-saturated-(3E)-enoyl-CoA + NADP(+). The catalysed reaction is (2E,4E)-hexadienoyl-CoA + NADPH + H(+) = (3E)-hexenoyl-CoA + NADP(+). Its function is as follows. Auxiliary enzyme of beta-oxidation. It participates in the metabolism of unsaturated fatty enoyl-CoA esters having double bonds in both even- and odd-numbered positions in mitochondria. Catalyzes the NADP-dependent reduction of 2,4-dienoyl-CoA to yield trans-3-enoyl-CoA. This Mus musculus (Mouse) protein is 2,4-dienoyl-CoA reductase [(3E)-enoyl-CoA-producing], mitochondrial (Decr1).